Here is a 380-residue protein sequence, read N- to C-terminus: DNA primase small subunit PriS (380 aa).

Residues Asp-101, Asp-103, and Asp-282 contribute to the active site.

It belongs to the eukaryotic-type primase small subunit family. Heterodimer of a small subunit (PriS) and a large subunit (PriL). It depends on Mg(2+) as a cofactor. Mn(2+) is required as a cofactor.

In terms of biological role, catalytic subunit of DNA primase, an RNA polymerase that catalyzes the synthesis of short RNA molecules used as primers for DNA polymerase during DNA replication. The small subunit contains the primase catalytic core and has DNA synthesis activity on its own. Binding to the large subunit stabilizes and modulates the activity, increasing the rate of DNA synthesis while decreasing the length of the DNA fragments, and conferring RNA synthesis capability. The DNA polymerase activity may enable DNA primase to also catalyze primer extension after primer synthesis. May also play a role in DNA repair. In Hyperthermus butylicus (strain DSM 5456 / JCM 9403 / PLM1-5), this protein is DNA primase small subunit PriS.